A 207-amino-acid chain; its full sequence is Ribosomal RNA small subunit methyltransferase G (207 aa).

S-adenosyl-L-methionine contacts are provided by residues G73, L78, 124-125 (VE), and R139.

The protein belongs to the methyltransferase superfamily. RNA methyltransferase RsmG family.

The protein resides in the cytoplasm. The catalysed reaction is guanosine(527) in 16S rRNA + S-adenosyl-L-methionine = N(7)-methylguanosine(527) in 16S rRNA + S-adenosyl-L-homocysteine. Functionally, specifically methylates the N7 position of guanine in position 527 of 16S rRNA. The protein is Ribosomal RNA small subunit methyltransferase G of Escherichia coli (strain SMS-3-5 / SECEC).